Reading from the N-terminus, the 157-residue chain is Prefoldin subunit alpha (157 aa).

This sequence belongs to the prefoldin subunit alpha family. In terms of assembly, heterohexamer of two alpha and four beta subunits.

It localises to the cytoplasm. Functionally, molecular chaperone capable of stabilizing a range of proteins. Seems to fulfill an ATP-independent, HSP70-like function in archaeal de novo protein folding. The polypeptide is Prefoldin subunit alpha (Methanopyrus kandleri (strain AV19 / DSM 6324 / JCM 9639 / NBRC 100938)).